A 185-amino-acid chain; its full sequence is Ribosome-recycling factor (185 aa).

This sequence belongs to the RRF family.

It is found in the cytoplasm. Functionally, responsible for the release of ribosomes from messenger RNA at the termination of protein biosynthesis. May increase the efficiency of translation by recycling ribosomes from one round of translation to another. This is Ribosome-recycling factor from Xylella fastidiosa (strain 9a5c).